Here is a 448-residue protein sequence, read N- to C-terminus: Phosphoglucosamine mutase (448 aa).

Catalysis depends on serine 100, which acts as the Phosphoserine intermediate. The Mg(2+) site is built by serine 100, aspartate 240, aspartate 242, and aspartate 244. Serine 100 carries the post-translational modification Phosphoserine.

This sequence belongs to the phosphohexose mutase family. Mg(2+) is required as a cofactor. Activated by phosphorylation.

It carries out the reaction alpha-D-glucosamine 1-phosphate = D-glucosamine 6-phosphate. Functionally, catalyzes the conversion of glucosamine-6-phosphate to glucosamine-1-phosphate. This chain is Phosphoglucosamine mutase, found in Clostridioides difficile (strain 630) (Peptoclostridium difficile).